We begin with the raw amino-acid sequence, 341 residues long: Type II methyltransferase M.NgoPII (341 aa).

In terms of domain architecture, SAM-dependent MTase C5-type spans Met12–Arg341. The active site involves Cys84.

This sequence belongs to the class I-like SAM-binding methyltransferase superfamily. C5-methyltransferase family.

The catalysed reaction is a 2'-deoxycytidine in DNA + S-adenosyl-L-methionine = a 5-methyl-2'-deoxycytidine in DNA + S-adenosyl-L-homocysteine + H(+). A methylase that recognizes the double-stranded sequence 5'-GGCC-3', methylates C-3 on both strands, and protects the DNA from cleavage by the NgoPII endonuclease. This chain is Type II methyltransferase M.NgoPII (ngoPIIM), found in Neisseria gonorrhoeae.